Here is a 184-residue protein sequence, read N- to C-terminus: NADH-quinone oxidoreductase subunit B (184 aa).

[4Fe-4S] cluster contacts are provided by Cys-37, Cys-38, Cys-103, and Cys-132.

The protein belongs to the complex I 20 kDa subunit family. As to quaternary structure, NDH-1 is composed of 14 different subunits. Subunits NuoB, C, D, E, F, and G constitute the peripheral sector of the complex. [4Fe-4S] cluster is required as a cofactor.

The protein resides in the cell membrane. The catalysed reaction is a quinone + NADH + 5 H(+)(in) = a quinol + NAD(+) + 4 H(+)(out). NDH-1 shuttles electrons from NADH, via FMN and iron-sulfur (Fe-S) centers, to quinones in the respiratory chain. The immediate electron acceptor for the enzyme in this species is believed to be a menaquinone. Couples the redox reaction to proton translocation (for every two electrons transferred, four hydrogen ions are translocated across the cytoplasmic membrane), and thus conserves the redox energy in a proton gradient. The polypeptide is NADH-quinone oxidoreductase subunit B (Mycolicibacterium paratuberculosis (strain ATCC BAA-968 / K-10) (Mycobacterium paratuberculosis)).